The chain runs to 308 residues: tRNA pseudouridine synthase B (308 aa).

The active-site Nucleophile is the Asp-49.

It belongs to the pseudouridine synthase TruB family. Type 1 subfamily.

It carries out the reaction uridine(55) in tRNA = pseudouridine(55) in tRNA. Its function is as follows. Responsible for synthesis of pseudouridine from uracil-55 in the psi GC loop of transfer RNAs. The polypeptide is tRNA pseudouridine synthase B (Corynebacterium jeikeium (strain K411)).